The primary structure comprises 181 residues: Glutamyl-tRNA(Gln) amidotransferase subunit C, chloroplastic/mitochondrial (181 aa).

It belongs to the GatC family. Subunit of the heterotrimeric GatCAB amidotransferase (AdT) complex, composed of A, B and C subunits.

It is found in the mitochondrion. The protein localises to the plastid. It localises to the chloroplast. The enzyme catalyses L-glutamyl-tRNA(Gln) + L-glutamine + ATP + H2O = L-glutaminyl-tRNA(Gln) + L-glutamate + ADP + phosphate + H(+). In terms of biological role, allows the formation of correctly charged Gln-tRNA(Gln) through the transamidation of misacylated Glu-tRNA(Gln) in chloroplasts and mitochondria. The reaction takes place in the presence of glutamine and ATP through an activated gamma-phospho-Glu-tRNA(Gln). This Picea sitchensis (Sitka spruce) protein is Glutamyl-tRNA(Gln) amidotransferase subunit C, chloroplastic/mitochondrial.